We begin with the raw amino-acid sequence, 285 residues long: Transcription factor LBX1 (285 aa).

Residues 1–20 (MTSKEDGKAAPGEERRRSPL) are compositionally biased toward basic and acidic residues. The tract at residues 1–36 (MTSKEDGKAAPGEERRRSPLDHLPPPANSNKPLTPF) is disordered. The segment at residues 125–184 (RRKSRTAFTNHQIYELEKRFLYQKYLSPADRDQIAQQLGLTNAQVITWFQNRRAKLKRDL) is a DNA-binding region (homeobox). Residues 212 to 285 (EQNSEASGGG…EEDEEIDVDD (74 aa)) are disordered. The segment covering 218–230 (SGGGGGGGGGGCG) has biased composition (gly residues). Residues 272 to 285 (CSEDEEDEEIDVDD) are compositionally biased toward acidic residues.

As to quaternary structure, interacts with SKOR1 which acts as a transcriptional corepressor.

The protein localises to the nucleus. Transcription factor required for the development of GABAergic interneurons in the dorsal horn of the spinal cord and migration and further development of hypaxial muscle precursor cells for limb muscles, diaphragm and hypoglossal cord. The sequence is that of Transcription factor LBX1 from Rattus norvegicus (Rat).